The primary structure comprises 126 residues: Large ribosomal subunit protein bL17 (126 aa).

Belongs to the bacterial ribosomal protein bL17 family. In terms of assembly, part of the 50S ribosomal subunit. Contacts protein L32.

The chain is Large ribosomal subunit protein bL17 from Xylella fastidiosa (strain M12).